The sequence spans 227 residues: Cytochrome c oxidase subunit 2 (227 aa).

Topologically, residues 1-14 are mitochondrial intermembrane; the sequence is MAYPMQLGFQDATS. The chain crosses the membrane as a helical span at residues 15–45; it reads PIMEELLHFHDHTLMIVFLISSLVLYIISLM. Over 46–59 the chain is Mitochondrial matrix; that stretch reads LTTKLTHTSTMDAQ. The helical transmembrane segment at 60–87 threads the bilayer; that stretch reads EVETVWTILPAVILIMIALPSLRILYMM. The Mitochondrial intermembrane segment spans residues 88-227; sequence DEINNPSLTV…HFEKWSASML (140 aa). Positions 161, 196, 198, 200, 204, and 207 each coordinate Cu cation. E198 is a Mg(2+) binding site.

It belongs to the cytochrome c oxidase subunit 2 family. In terms of assembly, component of the cytochrome c oxidase (complex IV, CIV), a multisubunit enzyme composed of 14 subunits. The complex is composed of a catalytic core of 3 subunits MT-CO1, MT-CO2 and MT-CO3, encoded in the mitochondrial DNA, and 11 supernumerary subunits COX4I, COX5A, COX5B, COX6A, COX6B, COX6C, COX7A, COX7B, COX7C, COX8 and NDUFA4, which are encoded in the nuclear genome. The complex exists as a monomer or a dimer and forms supercomplexes (SCs) in the inner mitochondrial membrane with NADH-ubiquinone oxidoreductase (complex I, CI) and ubiquinol-cytochrome c oxidoreductase (cytochrome b-c1 complex, complex III, CIII), resulting in different assemblies (supercomplex SCI(1)III(2)IV(1) and megacomplex MCI(2)III(2)IV(2)). Found in a complex with TMEM177, COA6, COX18, COX20, SCO1 and SCO2. Interacts with TMEM177 in a COX20-dependent manner. Interacts with COX20. Interacts with COX16. Requires Cu cation as cofactor.

The protein localises to the mitochondrion inner membrane. The catalysed reaction is 4 Fe(II)-[cytochrome c] + O2 + 8 H(+)(in) = 4 Fe(III)-[cytochrome c] + 2 H2O + 4 H(+)(out). Functionally, component of the cytochrome c oxidase, the last enzyme in the mitochondrial electron transport chain which drives oxidative phosphorylation. The respiratory chain contains 3 multisubunit complexes succinate dehydrogenase (complex II, CII), ubiquinol-cytochrome c oxidoreductase (cytochrome b-c1 complex, complex III, CIII) and cytochrome c oxidase (complex IV, CIV), that cooperate to transfer electrons derived from NADH and succinate to molecular oxygen, creating an electrochemical gradient over the inner membrane that drives transmembrane transport and the ATP synthase. Cytochrome c oxidase is the component of the respiratory chain that catalyzes the reduction of oxygen to water. Electrons originating from reduced cytochrome c in the intermembrane space (IMS) are transferred via the dinuclear copper A center (CU(A)) of subunit 2 and heme A of subunit 1 to the active site in subunit 1, a binuclear center (BNC) formed by heme A3 and copper B (CU(B)). The BNC reduces molecular oxygen to 2 water molecules using 4 electrons from cytochrome c in the IMS and 4 protons from the mitochondrial matrix. This chain is Cytochrome c oxidase subunit 2 (MT-CO2), found in Tragelaphus imberbis (Lesser kudu).